We begin with the raw amino-acid sequence, 428 residues long: Maltoporin (428 aa).

The first 24 residues, 1 to 24, serve as a signal peptide directing secretion; sequence MTTLRKLPIALAVAAGVLSTQAMA.

Belongs to the porin LamB (TC 1.B.3) family. Homotrimer formed of three 18-stranded antiparallel beta-barrels, containing three independent channels.

It localises to the cell outer membrane. It carries out the reaction beta-maltose(in) = beta-maltose(out). Involved in the transport of maltose and maltodextrins. This Yersinia enterocolitica serotype O:8 / biotype 1B (strain NCTC 13174 / 8081) protein is Maltoporin.